Consider the following 397-residue polypeptide: Probable protein phosphatase 2C 74 (397 aa).

The PPM-type phosphatase domain maps to 133-391 (GFWVASRRGL…DDVTVMVVDL (259 aa)). 4 residues coordinate Mn(2+): D170, G171, D343, and D382.

Belongs to the PP2C family. Mg(2+) serves as cofactor. It depends on Mn(2+) as a cofactor.

It catalyses the reaction O-phospho-L-seryl-[protein] + H2O = L-seryl-[protein] + phosphate. The enzyme catalyses O-phospho-L-threonyl-[protein] + H2O = L-threonyl-[protein] + phosphate. In Oryza sativa subsp. japonica (Rice), this protein is Probable protein phosphatase 2C 74.